Consider the following 160-residue polypeptide: Transcription factor 12 (160 aa).

A disordered region spans residues 1–58 (NKEKDENLHEPPSSDDMKSDDESSQKDIKVSSRGRTSTNEDEDLNPEQKIEREKERRM). The segment covering 15–30 (DDMKSDDESSQKDIKV) has biased composition (basic and acidic residues). A Phosphoserine modification is found at Ser19. Residue Lys29 forms a Glycyl lysine isopeptide (Lys-Gly) (interchain with G-Cter in SUMO2) linkage. The residue at position 36 (Thr36) is a Phosphothreonine. A Phosphoserine modification is found at Ser37. Positions 46–58 (PEQKIEREKERRM) are enriched in basic and acidic residues. In terms of domain architecture, bHLH spans 55–108 (ERRMANNARERLRVRDINEAFKELGRMCQLHLKSEKPQTKLLILHQAVAVILSL). Residues Lys87 and Lys131 each participate in a glycyl lysine isopeptide (Lys-Gly) (interchain with G-Cter in SUMO2) cross-link. A class A specific domain region spans residues 110 to 133 (QQVRERNLNPKAACLKRREEEKVS). The interval 132 to 160 (VSVVSAEPPTTLPGTHPGLSETTNPMGHM) is disordered. The span at 139-150 (PPTTLPGTHPGL) shows a compositional bias: low complexity. The span at 151–160 (SETTNPMGHM) shows a compositional bias: polar residues.

As to quaternary structure, efficient DNA binding requires dimerization with another bHLH protein. Forms homo- or heterooligomers with myogenin, E12 and ITF2 proteins. Interacts with PTF1A. Interacts with RUNX1T1. Interacts with NEUROD2. Interacts with BHLHA9.

Its subcellular location is the nucleus. Functionally, transcriptional regulator. Involved in the initiation of neuronal differentiation. Activates transcription by binding to the E box (5'-CANNTG-3'). May be involved in the functional network that regulates the development of the GnRH axis. In Papio hamadryas (Hamadryas baboon), this protein is Transcription factor 12 (TCF12).